The primary structure comprises 326 residues: MGEETLRIAGRRSKLAVIQSESVKEIVQREFPNYTCTVLAKQTLGDQVQSKPLYAFGGKALWTKELEDLLYEEDLDQRIDMIVHSLKDMPTQLPEGFELGAITKRVDPSDCLVMAAGSPYKTLGDLPNGSVVGTSSIRRSAQLRRRYPHLVFASVRGNIQTRLKKLDDPENECKCIILATAGLVRLGLESRITQRFDSTIMLHAVGQGALGIETRTGDERLQAILAKVADRNSTICCLAERSLMRTLEGGCSVPIGVYSTFDEETSMLTLDGLVVSVDGADAAEATVSYKIKSDKEDAIACGQLLAAKLLEAGAKKILDAIHLPEA.

Cysteine 251 is modified (S-(dipyrrolylmethanemethyl)cysteine).

This sequence belongs to the HMBS family. Dipyrromethane serves as cofactor.

It catalyses the reaction 4 porphobilinogen + H2O = hydroxymethylbilane + 4 NH4(+). It participates in porphyrin-containing compound metabolism; protoporphyrin-IX biosynthesis; coproporphyrinogen-III from 5-aminolevulinate: step 2/4. Functionally, tetrapolymerization of the monopyrrole PBG into the hydroxymethylbilane pre-uroporphyrinogen in several discrete steps. This chain is Porphobilinogen deaminase (HEM3), found in Eremothecium gossypii (strain ATCC 10895 / CBS 109.51 / FGSC 9923 / NRRL Y-1056) (Yeast).